The following is an 810-amino-acid chain: Fibroblast growth factor receptor 1-A (810 aa).

An N-terminal signal peptide occupies residues 1-26 (MKMMMIMKTTLLLISVLLTQALQSQG). Residues 27–363 (RPAIQDEAPA…TQLPNQTYLE (337 aa)) lie on the Extracellular side of the membrane. Ig-like C2-type domains are found at residues 28-115 (PAIQ…FNIS), 147-235 (PDKM…YQLD), and 244-346 (PILQ…AWLT). A disulfide bridge links cysteine 53 with cysteine 99. Residues asparagine 107, asparagine 113, asparagine 216, asparagine 229, asparagine 253, asparagine 285, asparagine 306, asparagine 319, and asparagine 358 are each glycosylated (N-linked (GlcNAc...) asparagine). Cysteine 167 and cysteine 219 are joined by a disulfide. Residues cysteine 266 and cysteine 330 are joined by a disulfide bond. Residues 364 to 384 (VLIYCVGFFLICVMVGTAVLA) traverse the membrane as a helical segment. The Cytoplasmic portion of the chain corresponds to 385–810 (KMHSSAKKSD…PNRGVAFKKR (426 aa)). Residue tyrosine 450 is modified to Phosphotyrosine; by autocatalysis. Residues 465 to 754 (LVLGKPLGEG…LSMTSNQEYL (290 aa)) form the Protein kinase domain. Residues 471-477 (LGEGCFG), lysine 501, 549-551 (EFA), and asparagine 555 each bind ATP. Residues tyrosine 570 and tyrosine 572 each carry the phosphotyrosine; by autocatalysis modification. The Proton acceptor role is filled by aspartate 610. ATP contacts are provided by arginine 614 and aspartate 628. A phosphotyrosine; by autocatalysis mark is found at tyrosine 640, tyrosine 641, tyrosine 717, and tyrosine 753. Residues 787 to 810 (AGADEPCLPKFPPHPNRGVAFKKR) are disordered.

Belongs to the protein kinase superfamily. Tyr protein kinase family. Fibroblast growth factor receptor subfamily. In terms of assembly, monomer. Homodimer after ligand binding. Interacts with cnpy1. In terms of processing, autophosphorylated. Binding of FGF family members together with heparan sulfate proteoglycan or heparin promotes receptor dimerization and autophosphorylation on tyrosine residues. Autophosphorylation occurs in trans between the two FGFR molecules present in the dimer and proceeds in a highly ordered manner. Phosphotyrosine residues provide docking sites for interacting proteins and so are crucial for FGFR1 function and its regulation. Ubiquitinated. FGFR1 is rapidly ubiquitinated after autophosphorylation, leading to internalization and degradation. Post-translationally, N-glycosylated in the endoplasmic reticulum. The N-glycan chains undergo further maturation to an Endo H-resistant form in the Golgi apparatus. In terms of tissue distribution, initially expressed in adaxial mesoderm with transcripts distinctly localized to the anterior portion of each half-somite. Hereupon, also strongly expressed in the otic vesicles, branchial arches and the brain, especially at the midbrain-hindbrain boundary (MHB).

The protein resides in the cell membrane. The protein localises to the nucleus. It localises to the cytoplasm. Its subcellular location is the cytosol. It is found in the cytoplasmic vesicle. The enzyme catalyses L-tyrosyl-[protein] + ATP = O-phospho-L-tyrosyl-[protein] + ADP + H(+). Its activity is regulated as follows. Present in an inactive conformation in the absence of bound ligand. Ligand binding leads to dimerization and activation by sequential autophosphorylation on tyrosine residues. Tyrosine-protein kinase that acts as a cell-surface receptor for fibroblast growth factors and plays an essential role in the regulation of embryonic development, cell proliferation, differentiation and migration. Required for normal mesoderm patterning and normal skeletogenesis. Phosphorylates PLCG1, FRS2, GAB1 and SHB. Ligand binding leads to the activation of several signaling cascades. Activation of PLCG1 leads to the production of the cellular signaling molecules diacylglycerol and inositol-1,4,5-trisphosphate. Phosphorylation of FRS2 triggers recruitment of GRB2, GAB1, PIK3R1 and SOS1, and mediates activation of RAS, MAPK1/ERK2, MAPK3/ERK1 and the MAP kinase signaling pathway, as well as of the AKT1 signaling pathway. Promotes phosphorylation of SHC1, STAT1 and PTPN11/SHP2. In the nucleus, enhances RPS6KA1 and CREB1 activity and contributes to the regulation of transcription. FGFR1 signaling is down-regulated by ubiquitination, internalization and degradation. In Danio rerio (Zebrafish), this protein is Fibroblast growth factor receptor 1-A (fgfr1a).